The sequence spans 650 residues: Zinc finger CCCH domain-containing protein 55 (650 aa).

Residues 67–162 (NSPSSTPTSP…THSGSADAAG (96 aa)) form a disordered region. Low complexity predominate over residues 105–128 (SPSSPSSTSPWSFNNCINGNNGNN). The segment covering 141-154 (PFSSHQSNGLSATH) has biased composition (polar residues). The C3H1-type zinc finger occupies 232-254 (PCVYFSRGLCKNGESCKFIHGGY). Residues 357-433 (RQIYLTFPAD…RVLVKPYKEK (77 aa)) form the RRM domain. The tract at residues 566–650 (PVVNPMSVNN…PPVTTNNLMQ (85 aa)) is disordered. A compositionally biased stretch (basic and acidic residues) spans 581–590 (AKEETNKSEL).

The sequence is that of Zinc finger CCCH domain-containing protein 55 from Arabidopsis thaliana (Mouse-ear cress).